The chain runs to 2788 residues: MALGGALAAALALAFAVLGPLSHKVLAGDCKGQRQVLREAPGFVTDGAGNYSVNGNCEWLIEAPSPQHRILLDFLFLDTECTYDYLFVYDGDSPQGPLLASLSGSTRPPPIEASSGKMLLHLFSDANYNLLGFNASFRFSLCPGGCQNHGQCKSPGVCVCEPGWGGPDCGLQECSAYCGSHGTCASTLGPCRCEPGFLGRACDLHLWENQGAGWWHSVSAGDPAFSARVGAAGAFLSPPGLLAVFGGQDLNKALGDLVLYNFSTNTWESWDLTPAPAARHSHVAVAWAGFLVLMGGELANGLLTNDVWAFSPLGGGHWELLAPPASSSSGPPGLAGHAAALVDDIWLYVSGGRTQHDLFSSGLFRFRLDHTSRGYWEQVIPAGGRPPAATGHSMVFHAPSRTLLVHGGHRPSTARFSVRVNSTELFHVDRRVWTTLKGRDGLQGPRERAFHTASVLGNYMVVYGGNVHTHYQEEKCYEDGIFFYHLGCHQWVSGAELAPPGTPEGRAAPPSGRYSHVAAVLGGSVLLVAGGYSGRPRGDLMAYKVPPFVFQAPALDYHLDYCSMYTDHSVCSRDPECSWCQGACQSAPPPGTPSGACPAASCLGLGRLLSDCQACLAFSSPTAPPRGPGTLGWCVHNESCLPRPEQARCRGEQISGTVGWWGPAPVFVTSLEACVTQSFLPGLHLLTFQQPPNASQPDKVSIVRSTTITLTPSAETDVSLVYRGFIYPMLPGGPGGPGAEDVAVWARAQRLHVLARMARGPDTENMEEVGRWVAQQEKETRRLQRPGSSRLFPLPGRGNKYAVEIRGQLNGSAGPGHSELTLLWDRTGVPGGSEISFFFLEPYRSLACSSYSSCLGCLADQGCGWCLNSATCHLRQGRAHCEDDGNGESLLVLVPALCPLCEEHRDCHACTQDPFCEWHQSTNRKGDAACSRRGRGRGALKNPEECPPLCSQRLTCEDCLANSSQCAWCQSTHTCFLFAAYLARYPHGGCRGWDDSVHSEPRCRSCHGFLTCHECLQSHECGWCGNEDNPTLGRCLQGDFSGPLGGGNCSLWVGEGLGLPVALPARWAYARCPDVDECRLGLARCHPRATCLNTPLSYECHCQRGYQGDGITHCNRTCLEDCGHGVCSGPPDFTCVCDLGWTSDLPPPTPAPGPPAPRCSRDCGCNFHSHCRRRGPGYCDECQDWTWGEHCERCRPGSFGNATGSGGCRPCQCNGHGDPRRGHCDNLSGLCFCQDHTEGAHCQICSPGYYGDPRAGGSCFRECGGRALLTNVSSVALGSRRFGGLLPPGGGTARAGPGLSYCVWVVSATEALQPCAPGTLCPPLTLTFSPDSSTPCTLSYVLAFDGFPRFLDTGVVQSDRSLIAAFCGQRRDRPLTVQALSGLLVLHWEANGSSSWGFNASVGSARCGSGGPGSCPVPQECVPQDGAAGAGLCRCPQGWAGPHCRMALCPENCNAHTGAGICNQSLGVCICAEGFGGPDCATKLDGGQLVWETLMDSRLSADTASRFLHRLGHTMVEGPDATLWMFGGLGLPQGLLGNLYRYSVSERRWTQMLAGAEDGGPGPSPRSFHAAAYVPAGRGAMYLLGGLTAGGITCDFWVLNLTTLQWRQEKAPQSIELPAVAGHTLTARRGLSLLLVGGYSPENGFNQQLLEYQLATTWVSGAQSGTPPTGLYGHSAVYHEATDSLYVFGGFRFHVELAAPSPELYSLHCPDRTWSLLAPSQGAKPRPRLFHASALLGDTMVVLGGRSDPDEFSSDVLLYQVNCNTWLLPDLTRPAFVGSPMEESVAHAVAAVGSRLYISGGFGGVALGRLLALTLPPDPCRLLPSPEACNQSGACTWCHGACLSGDQAHRLGCGVPPCSPMPRSPEECRRLRTCSECLARHPRTLQPGDGEASVPRCKWCTNCPEGACIGRNGSCTSENDCRINQREVFWAGNCSEAACGAADCEQCTREGKCMWTRQFKRTGETRRILSVQPTYDWTCFSHSLLNVSPMPVESSPPLPCPTPCHLLPNCTSCLASKGADGGWQHCVWSSSLQQCLSPSYLPLRCMAGGCGRLLRGPESCSLGCAQATQCALCLRRPHCGWCAWGGQDGGGHCMEGGLSGPRDGLTCGRPGASWAFLSCPPEDECANGHHDCNETQNCHDQPHGYECSCKTGYTMDNVTGVCRPVCAQGCVNGSCVEPDHCRCHFGFVGRNCSTECRCNRHSECAGVGARDHCLLCRNHTKGSHCEQCLPLFVGSALGGGTCRPCHAFCRGNSHVCVSRKELEMARREPEKYSLDPEEIEAWVAEGPSEDEAVCVNCQNNSYGDRCESCLHGYFLLDGKCTKCQCNGHADTCNEQDGTGCPCQNNTETGVCQGSSPSDRRDCYKYQCAKCRESFHGSPLGGQQCYRLISVEQECCLDPTSQTNCFHEPKRRALGPGRTVLFGVQPKFTNVDIRLTLDVTFGAVDLYVSTSYDTFVVRVAPDTGVHTVHIQPPPPPPPPPPPADGVPRVASDLGGLGTGSGSGSPVEPRVREVWPRGLITYVTVTEPSAVLVVRSVRDRLVITYPHEHHALKSSRFYLLLLGVGDPNGPGANGSADSQGLLFFRQDQAHIDLFVFFSVFFSCFFLFLSLCVLLWKAKQALDQRQEQRRHLQEMTKMASRPFAKVTVCFPPDPAGPAPAWKPAGLPPPAFRRSEPFLAPLLLTGAGGPWGPMGGGCCPPALPATTAGLRAGPITLEPTEDGMAGVATLLLQLPGGPHAPNGACLGSALVTLRHRLHEYCGGSGGAGGSGHGGGGGRKGLLSQDNLTSMSL.

The N-terminal stretch at 1 to 27 (MALGGALAAALALAFAVLGPLSHKVLA) is a signal peptide. Residues 28–2590 (GDCKGQRQVL…FFRQDQAHID (2563 aa)) lie on the Extracellular side of the membrane. 6 disulfides stabilise this stretch: Cys-30–Cys-57, Cys-142–Cys-152, Cys-146–Cys-158, Cys-174–Cys-184, Cys-178–Cys-191, and Cys-193–Cys-202. The region spanning 30–140 (CKGQRQVLRE…LGFNASFRFS (111 aa)) is the CUB 1 domain. Asn-50 is a glycosylation site (N-linked (GlcNAc...) asparagine). 2 consecutive EGF-like domains span residues 138-168 (RFSL…GGPD) and 170-203 (GLQE…RACD). Kelch repeat units lie at residues 241–287 (LLAV…AVAW), 290–338 (FLVL…AGHA), 346–399 (WLYV…FHAP), 402–453 (TLLV…FHTA), 459–511 (YMVV…APPS), and 525–575 (VLLV…SRDP). PSI domains lie at 561-613 (YCSM…SDCQ), 847-899 (ACSS…ALCP), and 900-947 (LCEE…EECP). An N-linked (GlcNAc...) asparagine glycan is attached at Asn-1048. An EGF-like 3; calcium-binding domain is found at 1074 to 1115 (DVDECRLGLARCHPRATCLNTPLSYECHCQRGYQGDGITHCN). Cystine bridges form between Cys-1078–Cys-1091, Cys-1085–Cys-1100, Cys-1102–Cys-1114, Cys-1163–Cys-1171, Cys-1165–Cys-1179, Cys-1182–Cys-1191, Cys-1194–Cys-1208, Cys-1211–Cys-1224, Cys-1213–Cys-1231, Cys-1233–Cys-1242, Cys-1245–Cys-1259, Cys-1263–Cys-1302, Cys-1336–Cys-1367, Cys-1407–Cys-1421, Cys-1415–Cys-1433, and Cys-1435–Cys-1444. Laminin EGF-like domains are found at residues 1163–1210 (CGCN…GCRP) and 1211–1261 (CQCN…SCFR). The CUB 2 domain occupies 1263–1405 (CGGRALLTNV…WGFNASVGSA (143 aa)). A glycan (N-linked (GlcNAc...) asparagine) is linked at Asn-1271. Residue Thr-1353 is modified to Phosphothreonine. The EGF-like 4 domain occupies 1403 to 1445 (GSARCGSGGPGSCPVPQECVPQDGAAGAGLCRCPQGWAGPHCR). Kelch repeat units follow at residues 1522-1570 (TLWM…SFHA), 1580-1626 (AMYL…HTLT), 1632-1678 (SLLL…SAVY), 1684-1734 (SLYV…HASA), 1739-1786 (TMVV…ESVA), and 1795-1840 (RLYI…WCHG). PSI domains are found at residues 1819–1859 (PCRL…PPCS), 1867–1922 (ECRR…NDCR), 2003–2061 (PCHL…ESCS), and 2063–2120 (GCAQ…LSCP). The N-linked (GlcNAc...) asparagine glycan is linked to Asn-2009. The EGF-like 5 domain maps to 2121–2159 (PEDECANGHHDCNETQNCHDQPHGYECSCKTGYTMDNVT). 2 disulfides stabilise this stretch: Cys-2125–Cys-2138 and Cys-2132–Cys-2147. N-linked (GlcNAc...) asparagine glycosylation is found at Asn-2157 and Asn-2172. 4 cysteine pairs are disulfide-bonded: Cys-2196–Cys-2204, Cys-2198–Cys-2213, Cys-2216–Cys-2225, and Cys-2228–Cys-2242. 2 Laminin EGF-like domains span residues 2196-2244 (CRCN…TCRP) and 2323-2386 (CQCN…QCYR). The segment at 2465–2507 (HTVHIQPPPPPPPPPPPADGVPRVASDLGGLGTGSGSGSPVEP) is disordered. Residues 2470–2483 (QPPPPPPPPPPPAD) show a composition bias toward pro residues. The helical transmembrane segment at 2591-2611 (LFVFFSVFFSCFFLFLSLCVL) threads the bilayer. At 2612–2788 (LWKAKQALDQ…SQDNLTSMSL (177 aa)) the chain is on the cytoplasmic side. Residues 2761-2775 (GGAGGSGHGGGGGRK) show a composition bias toward gly residues. A disordered region spans residues 2761-2788 (GGAGGSGHGGGGGRKGLLSQDNLTSMSL). Over residues 2779 to 2788 (SQDNLTSMSL) the composition is skewed to polar residues.

As to expression, expressed in brain.

Its subcellular location is the membrane. Acts as a negative regulator of hedgehog signaling. The chain is Multiple epidermal growth factor-like domains protein 8 (Megf8) from Rattus norvegicus (Rat).